A 246-amino-acid chain; its full sequence is Large ribosomal subunit protein uL3 (246 aa).

A disordered region spans residues 140-162; sequence SHRSIGSTGGRQDPGKTFKNKKM. Glutamine 151 carries the post-translational modification N5-methylglutamine.

This sequence belongs to the universal ribosomal protein uL3 family. Part of the 50S ribosomal subunit. Forms a cluster with proteins L14 and L19. In terms of processing, methylated by PrmB.

One of the primary rRNA binding proteins, it binds directly near the 3'-end of the 23S rRNA, where it nucleates assembly of the 50S subunit. This is Large ribosomal subunit protein uL3 from Methylobacterium sp. (strain 4-46).